The chain runs to 874 residues: MALPSSSLSSRIPTGPHPLTHTQCIPHFSTTINAGISAAKPRSFYLRWGKDSQPKNLGSNKIIACVGEGTTSLPYQSAEKTDSLSAPTLVKREFPPGFWKDHVIDSLTSSHKVSAAEEKRIETLISDIKNIFRSMGYGETNPSAYDTAWVARIPAVDGSEQPEFPETLEWILQNQLKDGSWGEGFYFLAYDRILATLACMITLTLWRTGETQIRKGIEFFKTQAGKIEDEADSHRPSGFEIVFPAMLKEAKVLGLDLPYELSFIKQIIEKREAKLERLPTNILYALPTTLLYSLEGLQEIVDWQKIIKLQSKDGSFLTSPASTAAVFMRTGNKKCLEFLNFVLKKFGNHVPCHYPLDLFERLWAVDTVERLGIDRHFKEEIKDALDYVYSHWDERGIGWARENPVPDIDDTAMGLRILRLHGYNVSSDVLKTFRDENGEFFCFLGQTQRGVTDMLNVNRCSHVAFPGETIMQEAKLCTERYLRNALEDVGAFDKWALKKNIRGEVEYALKYPWHRSMPRLEARSYIEHYGPNDVWLGKTMYMMPYISNEKYLELAKLDFNHVQSLHQKELRDLRRWWKSSGFSDLKFTRERVTEIYFSAASFIFEPEFATCRYVYTKMSIFTVILDDLYDAHGTLDNLNLFSEGVKRWDLSLVDRMPQDMKICFTVLYNTVNEIAVEGRKRQGRDVLGYIRNVLEILLAAHTKEAEWSATRYVPSFDEYIENASVSISLGTVVLISALFTGEILTDDVLSKIGRGSRFLQLMDLTGRLVNDTKTYQAERGQGEVASAVQCYMKDHPEISEEEALKHVYTVMENALDELNREFVNNREVPDSCRRLVFETARIMQWFYMEGDGFTVSHEMEIKEHVKNCLFQPVA.

Residues 1 to 12 (MALPSSSLSSRI) are compositionally biased toward polar residues. The segment at 1–20 (MALPSSSLSSRIPTGPHPLT) is disordered. The transit peptide at 1–37 (MALPSSSLSSRIPTGPHPLTHTQCIPHFSTTINAGIS) directs the protein to the chloroplast. Positions 407, 409, 626, 630, 770, and 778 each coordinate Mg(2+). Residues 407 to 410 (DIDD) carry the DXDD motif motif. The DDXXD motif signature appears at 626-630 (DDLYD).

This sequence belongs to the terpene synthase family. Tpsd subfamily. Requires Mg(2+) as cofactor. Mn(2+) serves as cofactor.

It localises to the plastid. It is found in the chloroplast. The enzyme catalyses (+)-copalyl diphosphate = isopimara-8(14),15-diene + diphosphate. It participates in terpene metabolism; oleoresin biosynthesis. Its function is as follows. Terpene synthase (TPS) involved in the biosynthesis of diterpene natural products included in conifer oleoresin secretions and volatile emissions; these compounds contribute to biotic and abiotic stress defense against herbivores and pathogens. Catalyzes the conversion of (+)-copalyl diphosphate ((+)-CPP) to isopimaradiene. The polypeptide is Isopimaradiene synthase, chloroplastic (Picea sitchensis (Sitka spruce)).